The sequence spans 74 residues: U3-agatoxin-Ao1d (74 aa).

Residues 1–20 form the signal peptide; sequence MKAAISLLLLSALLFVVIEA. The propeptide occupies 21–34; that stretch reads ITYEEGKELFQGER. 4 disulfide bridges follow: Cys-37–Cys-53, Cys-44–Cys-58, Cys-52–Cys-68, and Cys-60–Cys-66. Ser-72 is modified (serine amide).

The protein belongs to the neurotoxin 07 (Beta/delta-agtx) family. 02 (aga-3) subfamily. As to expression, expressed by the venom gland.

It is found in the secreted. Its function is as follows. Insecticidal neurotoxin that induces an irreversible spastic paralysis when injected into insects. Modifies presynaptic voltage-gated sodium channels (Nav), causing them to open at the normal resting potential of the nerve. This leads to spontaneous release of neurotransmitter and repetitive action potentials in motor neurons. The chain is U3-agatoxin-Ao1d from Agelena orientalis (Funnel-web spider).